Consider the following 280-residue polypeptide: Ribosomal RNA small subunit methyltransferase A (280 aa).

The S-adenosyl-L-methionine site is built by asparagine 27, leucine 29, glycine 54, glutamate 76, aspartate 102, and asparagine 122.

This sequence belongs to the class I-like SAM-binding methyltransferase superfamily. rRNA adenine N(6)-methyltransferase family. RsmA subfamily.

Its subcellular location is the cytoplasm. It catalyses the reaction adenosine(1518)/adenosine(1519) in 16S rRNA + 4 S-adenosyl-L-methionine = N(6)-dimethyladenosine(1518)/N(6)-dimethyladenosine(1519) in 16S rRNA + 4 S-adenosyl-L-homocysteine + 4 H(+). Specifically dimethylates two adjacent adenosines (A1518 and A1519) in the loop of a conserved hairpin near the 3'-end of 16S rRNA in the 30S particle. May play a critical role in biogenesis of 30S subunits. The polypeptide is Ribosomal RNA small subunit methyltransferase A (Oleidesulfovibrio alaskensis (strain ATCC BAA-1058 / DSM 17464 / G20) (Desulfovibrio alaskensis)).